Consider the following 303-residue polypeptide: Probable cell division protein WhiA (303 aa).

A DNA-binding region (H-T-H motif) is located at residues 272 to 303 (SIQQLADSLSKPLTKSGVNHRLRKINKIADEL).

The protein belongs to the WhiA family.

In terms of biological role, involved in cell division and chromosome segregation. The protein is Probable cell division protein WhiA of Streptococcus gordonii (strain Challis / ATCC 35105 / BCRC 15272 / CH1 / DL1 / V288).